The primary structure comprises 206 residues: Ribosomal RNA small subunit methyltransferase G (206 aa).

S-adenosyl-L-methionine-binding positions include Gly74, Leu79, 125–126 (VE), and Arg140.

The protein belongs to the methyltransferase superfamily. RNA methyltransferase RsmG family.

The protein localises to the cytoplasm. It catalyses the reaction guanosine(527) in 16S rRNA + S-adenosyl-L-methionine = N(7)-methylguanosine(527) in 16S rRNA + S-adenosyl-L-homocysteine. Its function is as follows. Specifically methylates the N7 position of guanine in position 527 of 16S rRNA. This Shewanella amazonensis (strain ATCC BAA-1098 / SB2B) protein is Ribosomal RNA small subunit methyltransferase G.